The chain runs to 402 residues: 3-dehydroquinate synthase (402 aa).

It belongs to the archaeal-type DHQ synthase family.

It carries out the reaction 2-amino-2,3,7-trideoxy-D-lyxo-hept-6-ulosonate + NAD(+) + H2O = 3-dehydroquinate + NH4(+) + NADH + H(+). Functionally, catalyzes the oxidative deamination and cyclization of 2-amino-3,7-dideoxy-D-threo-hept-6-ulosonic acid (ADH) to yield 3-dehydroquinate (DHQ), which is fed into the canonical shikimic pathway of aromatic amino acid biosynthesis. The polypeptide is 3-dehydroquinate synthase (Methanopyrus kandleri (strain AV19 / DSM 6324 / JCM 9639 / NBRC 100938)).